The following is a 271-amino-acid chain: 3-methyl-2-oxobutanoate hydroxymethyltransferase (271 aa).

Mg(2+)-binding residues include aspartate 42 and aspartate 86. 3-methyl-2-oxobutanoate contacts are provided by residues 42–43 (DS), aspartate 86, and lysine 116. Glutamate 118 contributes to the Mg(2+) binding site. Glutamate 185 acts as the Proton acceptor in catalysis.

This sequence belongs to the PanB family. In terms of assembly, homodecamer; pentamer of dimers. Requires Mg(2+) as cofactor.

It is found in the cytoplasm. The catalysed reaction is 3-methyl-2-oxobutanoate + (6R)-5,10-methylene-5,6,7,8-tetrahydrofolate + H2O = 2-dehydropantoate + (6S)-5,6,7,8-tetrahydrofolate. The protein operates within cofactor biosynthesis; (R)-pantothenate biosynthesis; (R)-pantoate from 3-methyl-2-oxobutanoate: step 1/2. Its function is as follows. Catalyzes the reversible reaction in which hydroxymethyl group from 5,10-methylenetetrahydrofolate is transferred onto alpha-ketoisovalerate to form ketopantoate. This is 3-methyl-2-oxobutanoate hydroxymethyltransferase from Synechococcus sp. (strain CC9605).